Here is a 930-residue protein sequence, read N- to C-terminus: RNA-binding protein 10 (930 aa).

Composition is skewed to basic and acidic residues over residues 1–14 (MEYE…DRTG) and 21–45 (RSQD…RSYP). The segment at 1 to 127 (MEYERRGGRG…EDEEEEEEKA (127 aa)) is disordered. The span at 59–70 (DSSEEQSAEDSY) shows a compositional bias: acidic residues. A phosphoserine mark is found at S61 and S89. The span at 80 to 89 (RRRRRRHRHS) shows a compositional bias: basic residues. Basic and acidic residues predominate over residues 98 to 111 (RDGDYRDQDYRTEQ). Over residues 112-125 (GEEEEEEDEEEEEE) the composition is skewed to acidic residues. The RRM 1 domain maps to 129–209 (NIVMLRMLPQ…QKVSMHYSDP (81 aa)). Residues 212 to 242 (KINEDWLCNKCGVQNFKRREKCFKCGVPKSE) form a RanBP2-type zinc finger. In terms of domain architecture, RRM 2 spans 300-384 (DTIILRNLNP…KTINVEFAKG (85 aa)). K383 is modified (N6-acetyllysine). Disordered regions lie at residues 464–487 (GPGM…EAGA), 503–522 (APGL…TATN), 537–566 (ELQS…QYPV), 620–646 (EQSA…HKTK), and 712–753 (DLPK…EEKL). Residues 507–522 (YQQSAEGSSGQSTATN) are compositionally biased toward polar residues. A compositionally biased stretch (low complexity) spans 540-562 (SPTQPSSSAFPPATSPTAPEAYS). Residues 623 to 639 (ADGHKDTGASSKEGKEK) are compositionally biased toward basic and acidic residues. A phosphoserine mark is found at S718, S723, S733, S736, and S738. The segment covering 743-753 (ERGGPEREEKL) has biased composition (basic and acidic residues). The segment at 759-784 (LACLLCRRQFPSKEALIRHQQLSGLH) adopts a C2H2-type; atypical zinc-finger fold. Residues S781, S797, and S845 each carry the phosphoserine modification. Residues 818–861 (AAERREKYGIPEPPEPKRRKYGGISTASVDFEQPTRDGLGSDNI) form a disordered region. Residues 858-904 (SDNIGSRMLQAMGWKEGSGLGRKKQGIVTPIEAQTRVRGSGLGARGS) enclose the G-patch domain. Residue R902 is modified to Omega-N-methylarginine.

As to quaternary structure, associates with the spliceosome. Component of a large chromatin remodeling complex, at least composed of MYSM1, PCAF, RBM10 and KIF11/TRIP5.

The protein resides in the nucleus. Its function is as follows. Binds to ssRNA containing the consensus sequence 5'-AGGUAA-3'. May be involved in post-transcriptional processing, most probably in mRNA splicing. Binds to RNA homopolymers, with a preference for poly(G) and poly(U) and little for poly(A). May bind to specific miRNA hairpins. This chain is RNA-binding protein 10, found in Mus musculus (Mouse).